The chain runs to 335 residues: MTLPLLGPMTLSGFAHSWFFLFIFVIAGLIAVYVVLQLARQKRMLRFANMELLESVAPQRPSRFRHIPAMLLALSLVLFTVAMAGPTHDVRIPRNRAVVMLVIDVSQSMRATDVEPNRMVAAQEAAKQFADELTPGINLGLIAYAGTATVLVSPTTNREATKAALDKLQFADRTATGEAIFTALQAIATVGAVIGGGDTPPPARIVLFSDGKETMPTNPDNPKGAYTAARTAKDQGVPISTISFGTPYGFVEINDQRQPVPVDDETMKKVAQLSGGNSYNAATLAELNSVYASLQQQIGYETIRGDASMGWLRLGALVLVAAALAALLINRRLPT.

Helical transmembrane passes span 18-38 and 67-87; these read WFFL…VLQL and IPAM…AGPT. Residues 98–294 enclose the VWFA domain; the sequence is VVMLVIDVSQ…AELNSVYASL (197 aa). The chain crosses the membrane as a helical span at residues 309 to 329; sequence MGWLRLGALVLVAAALAALLI.

This sequence belongs to the UPF0353 family.

The protein resides in the cell membrane. This Mycobacterium marinum (strain ATCC BAA-535 / M) protein is UPF0353 protein MMAR_2288.